The following is a 78-amino-acid chain: Small ribosomal subunit protein bS18c (78 aa).

Belongs to the bacterial ribosomal protein bS18 family. As to quaternary structure, part of the 30S ribosomal subunit.

The protein localises to the plastid. It localises to the chloroplast. This is Small ribosomal subunit protein bS18c from Oltmannsiellopsis viridis (Marine flagellate).